We begin with the raw amino-acid sequence, 1169 residues long: Pesticidal crystal protein Cry8Ba (1169 aa).

Residues 1-26 (MSPNNQNEYEIIDATPSTSVSNDSNR) are disordered. Positions 15–25 (TPSTSVSNDSN) are enriched in polar residues.

Belongs to the delta endotoxin family.

Its function is as follows. Promotes colloidosmotic lysis by binding to the midgut epithelial cells of insects. Active on various scarabaeid beetles. The polypeptide is Pesticidal crystal protein Cry8Ba (cry8Ba) (Bacillus thuringiensis serovar kumamotoensis).